A 388-amino-acid chain; its full sequence is Protein Bel-2 (388 aa).

It belongs to the spumavirus protein Bel-2 family.

This Simian foamy virus type 3 (strain LK3) (SFVagm) protein is Protein Bel-2 (bel2).